An 895-amino-acid polypeptide reads, in one-letter code: Clathrin interactor EPSIN 2 (895 aa).

One can recognise an ENTH domain in the interval 18–150; that stretch reads KKVLKVPGVE…NDKERIAEVR (133 aa). Basic and acidic residues-rich tracts occupy residues 150 to 161, 177 to 236, and 245 to 257; these read RQKAAANRDKYR, DKYD…RSRS, and RSSE…DGHS. Residues 150–396 are disordered; sequence RQKAAANRDK…PTVTSMSAPT (247 aa). Phosphoserine occurs at positions 270 and 282. Over residues 329 to 348 the composition is skewed to low complexity; that stretch reads AAPEAASPPTGTNTANTTAT. 2 stretches are compositionally biased toward polar residues: residues 349-358 and 387-396; these read FVNESPSQKV and PTVTSMSAPT. The Clathrin binding signature appears at 409–413; the sequence is LADVF. 2 disordered regions span residues 436–533 and 758–784; these read AGPA…PQEQ and KQTN…GRSG. The span at 440–454 shows a compositional bias: low complexity; it reads PSFSTSQPSTQSFDD. The ALPHA-ADR binding motif lies at 454 to 456; sequence DPF. Composition is skewed to polar residues over residues 464-479, 515-533, and 759-769; these read FTST…NFGA, PASQ…PQEQ, and QTNTPATSTIN.

The protein belongs to the epsin family. Interacts with clathrin, VTI12, DELTA-ADR and ALPHA-ADR.

The protein resides in the golgi apparatus. It localises to the cytoplasmic vesicle. Its subcellular location is the clathrin-coated vesicle. Functionally, may have a role in transport via clathrin-coated vesicles from the trans-Golgi network to endosomes. Stimulates clathrin assembly. Binds to membranes enriched in phosphatidylinositol 3-phosphate (PtdIns(3)P). Plays an important role in protein trafficking. The protein is Clathrin interactor EPSIN 2 (EPSIN2) of Arabidopsis thaliana (Mouse-ear cress).